We begin with the raw amino-acid sequence, 316 residues long: MQWTEVSVMTTNEAVEAVSNILQEAGASGVKIDDAADYANLKPGKYGEIVDLDSIPHRTSGAEISAYYPETIFVPEILPTIRQRVQELTQFGLDPTPGTVTTKAVDDESWATAWQKYYHPVRVTRYLTVTPSWEKYTPVQPNEHVIRLDPGMAFGTGTHPTTRLSMTALEMVVRGGETMYDVGTGSGVLSIAAKYLGVNQITAFDLDEVAVRSAKTNLDLNPIATDVVAKPNDLLKGIHHPVDLVVANILAEIILPLVPQAWENLTPGGYFLTSGIIADKLAEVVAAQEKQGFVIDNILQMKDWRGVIAHRPTEDE.

The S-adenosyl-L-methionine site is built by T162, G183, D205, and N248.

Belongs to the methyltransferase superfamily. PrmA family.

Its subcellular location is the cytoplasm. The enzyme catalyses L-lysyl-[protein] + 3 S-adenosyl-L-methionine = N(6),N(6),N(6)-trimethyl-L-lysyl-[protein] + 3 S-adenosyl-L-homocysteine + 3 H(+). In terms of biological role, methylates ribosomal protein L11. This is Ribosomal protein L11 methyltransferase from Levilactobacillus brevis (strain ATCC 367 / BCRC 12310 / CIP 105137 / JCM 1170 / LMG 11437 / NCIMB 947 / NCTC 947) (Lactobacillus brevis).